We begin with the raw amino-acid sequence, 222 residues long: Coiled-coil domain-containing protein 70 (222 aa).

Coiled-coil stretches lie at residues 34 to 62 (LQEE…WNFR) and 129 to 188 (NALW…KAAW).

This is Coiled-coil domain-containing protein 70 (CCDC70) from Bos taurus (Bovine).